A 638-amino-acid chain; its full sequence is Probable potassium transport system protein Kup (638 aa).

Residues 1 to 20 form a disordered region; it reads MQVEHEVATEGGQAPASSGH. The next 12 membrane-spanning stretches (helical) occupy residues 24 to 44, 67 to 87, 115 to 135, 153 to 173, 181 to 201, 228 to 248, 263 to 283, 301 to 321, 353 to 373, 382 to 402, 413 to 433, and 435 to 455; these read IAGLAVAAIGVVYGDIGTSPL, ILSLVFWALVTVVSAKYVVFI, AWWLSVLGVFGAALFYGDGMI, PAFKPFVIPIALVVLVGLFVM, VGAIFGPVMVCWFLVLAVLGI, LIGWLALGAVVLAITGGEALY, WFSLVFPALYLNYLGQGALIL, LVYPMVGMATLATIIASQAVI, IYVPGVNWMLLGAVVALVVGF, AYGIAVTLTMMIDTVLAFVVV, AVLFLVVFLAVDIAFFSATTV, and IFAGGWFPLLIGAAIFTLLRT.

Belongs to the HAK/KUP transporter (TC 2.A.72) family.

It is found in the cell inner membrane. The catalysed reaction is K(+)(in) + H(+)(in) = K(+)(out) + H(+)(out). In terms of biological role, transport of potassium into the cell. Likely operates as a K(+):H(+) symporter. The chain is Probable potassium transport system protein Kup from Azoarcus sp. (strain BH72).